Consider the following 297-residue polypeptide: Acetyl-coenzyme A carboxylase carboxyl transferase subunit beta (297 aa).

In terms of domain architecture, CoA carboxyltransferase N-terminal spans 27–296; sequence LWHKCPSCEA…PEQAREAAAV (270 aa). Positions 31, 34, 50, and 53 each coordinate Zn(2+). A C4-type zinc finger spans residues 31–53; sequence CPSCEAVLYRPELEKTLDVCPKC.

It belongs to the AccD/PCCB family. As to quaternary structure, acetyl-CoA carboxylase is a heterohexamer composed of biotin carboxyl carrier protein (AccB), biotin carboxylase (AccC) and two subunits each of ACCase subunit alpha (AccA) and ACCase subunit beta (AccD). The cofactor is Zn(2+).

Its subcellular location is the cytoplasm. The enzyme catalyses N(6)-carboxybiotinyl-L-lysyl-[protein] + acetyl-CoA = N(6)-biotinyl-L-lysyl-[protein] + malonyl-CoA. It functions in the pathway lipid metabolism; malonyl-CoA biosynthesis; malonyl-CoA from acetyl-CoA: step 1/1. Its function is as follows. Component of the acetyl coenzyme A carboxylase (ACC) complex. Biotin carboxylase (BC) catalyzes the carboxylation of biotin on its carrier protein (BCCP) and then the CO(2) group is transferred by the transcarboxylase to acetyl-CoA to form malonyl-CoA. The polypeptide is Acetyl-coenzyme A carboxylase carboxyl transferase subunit beta (Pseudomonas putida (strain GB-1)).